A 572-amino-acid chain; its full sequence is Urease subunit alpha (572 aa).

The region spanning 133–572 (GGIDLHVHYI…TSLSQRYFLF (440 aa)) is the Urease domain. Ni(2+) is bound by residues histidine 138, histidine 140, and lysine 221. Lysine 221 is modified (N6-carboxylysine). Histidine 223 lines the substrate pocket. Ni(2+) contacts are provided by histidine 250 and histidine 276. Histidine 324 serves as the catalytic Proton donor. Aspartate 364 lines the Ni(2+) pocket.

Belongs to the metallo-dependent hydrolases superfamily. Urease alpha subunit family. In terms of assembly, heterotrimer of UreA (gamma), UreB (beta) and UreC (alpha) subunits. Three heterotrimers associate to form the active enzyme. The cofactor is Ni cation. Post-translationally, carboxylation allows a single lysine to coordinate two nickel ions.

The protein resides in the cytoplasm. It catalyses the reaction urea + 2 H2O + H(+) = hydrogencarbonate + 2 NH4(+). Its pathway is nitrogen metabolism; urea degradation; CO(2) and NH(3) from urea (urease route): step 1/1. This chain is Urease subunit alpha, found in Streptococcus thermophilus (strain CNRZ 1066).